A 153-amino-acid chain; its full sequence is UPF0756 membrane protein lmo1568 (153 aa).

4 helical membrane-spanning segments follow: residues 6–26 (MLFLLLFLLLGLIAKNNSLII), 54–74 (WGVTIITVAILIPIATGQIGF), 80–100 (SFKSAAGWIGLGAGIAVSILA), and 117–137 (LVFGTILAVVLFRGIAAGPVI).

The protein belongs to the UPF0756 family.

It is found in the cell membrane. This Listeria monocytogenes serovar 1/2a (strain ATCC BAA-679 / EGD-e) protein is UPF0756 membrane protein lmo1568.